Reading from the N-terminus, the 424-residue chain is Double homeobox protein 4 (424 aa).

Polar residues predominate over residues 1 to 10 (MALPTPSDST). Disordered regions lie at residues 1–24 (MALP…RRRL), 72–102 (SRQL…TAVT), 218–362 (LQPS…LQEP), and 388–414 (QPLL…PLSE). 2 DNA-binding regions (homeobox) span residues 19 to 78 (GRRR…LRQH) and 94 to 153 (GRRK…PGQG). The segment covering 265–274 (KSREDRDPQR) has biased composition (basic and acidic residues). 2 stretches are compositionally biased toward low complexity: residues 278-302 (PGPC…LAPP) and 319-329 (AGAAWEPQAGA). A required for interaction with EP300 and CREBBP, and for transcriptional activation of target genes region spans residues 327-424 (AGAAPPPQPA…EEYRALLEEL (98 aa)). Residues 405 to 424 (AASLEAPLSEEEYRALLEEL) form an important for transcriptional activation of target genes region.

It belongs to the paired homeobox family. In terms of assembly, binds DNA as a monomer. Interacts (via C-terminus) with EP300 and CREBBP. Isoform 1: Does not seem to be expressed in normal muscle, but is detected in muscle of individuals with FSHD, and also in testis (at protein level). Isoform 1: Does not seem to be expressed in normal muscle, but in muscle of individuals with FSHD, where it may be toxic to cells. Isoform 2: Detected in skeletal muscle, fibroblasts and testis from healthy individuals.

It is found in the nucleus. The protein localises to the cytoplasm. Functionally, transcription factor that is selectively and transiently expressed in cleavage-stage embryos. Binds to double-stranded DNA elements with the consensus sequence 5'-TAATCTAATCA-3'. Binds to chromatin containing histone H3 acetylated at 'Lys-27' (H3K27ac) and promotes deacetylation of H3K27ac. In parallel, binds to chromatin that lacks histone H3 acetylation at 'Lys-27' (H3K27ac) and recruits EP300 and CREBBP to promote acetylation of histone H3 at 'Lys-27' at new sites. Involved in transcriptional regulation of numerous genes, primarily as transcriptional activator, but also mediates repression of a set of target genes. Promotes expression of ZSCAN4 and KDM4E, two proteins with essential roles during early embryogenesis. Promotes nuclear translocation of CTNNB1/beta-catenin and its subsequent activation of target genes. Heterologous expression in cultured embryonic stem cells mediates transcription of HERVL retrotransposons and transcripts derived from ACRO1 and HSATII satellite repeats. May activate expression of PITX1. May regulate microRNA (miRNA) expression. Inappropriate expression can inhibit myogenesis and promote apoptosis. Its function is as follows. Probably inactive as a transcriptional activator, due to the absence of the C-terminal region that is important for transcriptional activation. Can inhibit transcriptional activation mediated by isoform 1. Heterologous expression of isoform 2 has no deleterious effect on cell survival. In Homo sapiens (Human), this protein is Double homeobox protein 4.